The sequence spans 400 residues: Putative F-box protein At5g41510 (400 aa).

In terms of domain architecture, F-box spans Ala2–Val47.

The sequence is that of Putative F-box protein At5g41510 from Arabidopsis thaliana (Mouse-ear cress).